A 457-amino-acid chain; its full sequence is Adenylosuccinate synthetase isozyme 1 (457 aa).

A disordered region spans residues 1 to 25 (MSGTRASNDRPPSAGGVKRGRLQHE). GTP is bound by residues 42–48 (GDEGKGK) and 70–72 (GHT). Aspartate 43 acts as the Proton acceptor in catalysis. Positions 43 and 70 each coordinate Mg(2+). Aspartate 43 is a binding site for substrate. IMP contacts are provided by residues 43–46 (DEGK), 68–71 (NAGH), threonine 163, arginine 177, asparagine 256, threonine 271, and arginine 335. Histidine 71 (proton donor) is an active-site residue. 331–337 (VTTGRKR) contributes to the substrate binding site. GTP contacts are provided by residues arginine 337, 363–365 (KLD), and 445–448 (GVGK).

Belongs to the adenylosuccinate synthetase family. Homodimer. Mg(2+) is required as a cofactor.

Its subcellular location is the cytoplasm. It catalyses the reaction IMP + L-aspartate + GTP = N(6)-(1,2-dicarboxyethyl)-AMP + GDP + phosphate + 2 H(+). It functions in the pathway purine metabolism; AMP biosynthesis via de novo pathway; AMP from IMP: step 1/2. Its function is as follows. Component of the purine nucleotide cycle (PNC), which interconverts IMP and AMP to regulate the nucleotide levels in various tissues, and which contributes to glycolysis and ammoniagenesis. Catalyzes the first committed step in the biosynthesis of AMP from IMP. This chain is Adenylosuccinate synthetase isozyme 1, found in Bos taurus (Bovine).